A 129-amino-acid chain; its full sequence is Lysozyme C (129 aa).

Residues 1 to 129 (KVYGRCELAA…VNAWTRGCRL (129 aa)) enclose the C-type lysozyme domain. Cystine bridges form between Cys-6/Cys-127, Cys-30/Cys-115, Cys-64/Cys-80, and Cys-76/Cys-94. Catalysis depends on residues Glu-35 and Asp-52.

The protein belongs to the glycosyl hydrolase 22 family. Monomer.

Its subcellular location is the secreted. It carries out the reaction Hydrolysis of (1-&gt;4)-beta-linkages between N-acetylmuramic acid and N-acetyl-D-glucosamine residues in a peptidoglycan and between N-acetyl-D-glucosamine residues in chitodextrins.. In terms of biological role, lysozymes have primarily a bacteriolytic function; those in tissues and body fluids are associated with the monocyte-macrophage system and enhance the activity of immunoagents. This is Lysozyme C (LYZ) from Syrmaticus soemmerringii (Copper pheasant).